A 6298-amino-acid polypeptide reads, in one-letter code: MSVTSEPGMISSFLLVYLSTLFISFVFGEAEIRFTGQTEFFVNETSTTVIRLVIERIGEPANVTAIVSLSGEDTGDFFDTYAAAFIPARGTNRTVYIAVCDDDLPEPDETFTFHLTLQKPSANVKLGWPRAASVTILSNDNAFGIISFSTPSSISVIEPRSRNASVPLTLIREKGTYGMVTVTFDVSGGPNPPEEDLNPVRGNITFPPGRATVIYNVTVLDDEVPENDELFLIQLRSVEGGAEINASRSSVEIIVKKNDSPVNFMQSVYVVPEDDHVLTIPVLRGKDSDGNLIGSDETQVSIRYKVMTWDSTAHAQQNVDFIDLQPDTTLVFPPFVHESHLKFQIIDDLIPEIAESFHIMLLKNTLQGDAVLMGPSTVQVTIKPNDKPYGVLSFNSILFERPVIIDEDTASSSRFEEIAVVRNGGTHGNVSVSWVLTRNSSDPSPVTADITPASGTLQFAQGQMLAPISLVVFDDDLPEEAEAYLLTILPHTIQGGAEVSEPAQLLFYIQDSDNVYGEIAFFPGESQKIESSPSERSLSLSLARRGGSKGDVRVIYSALYIPAGAMDPLRAKDGILNTSRRSSLLFPEQNQQVSIKLPIRNDAFLQNGAHFLVQLEAVVLVNIFPPIPPVSPRFGEIRNISLLVTPAIANGEIGFLSNLPIILHEPKDSSAEVVSIPLHRDGTDGQATVYWSLRPSGFNSKAVTLDDAGPFNGSVVFLSGQNETSINITVKGDDIPELNETVTLSLDRVSVDSDVLKSGYTSRDLIILENDDPGGIFEFSYDSRGPYVIKEGDAVELRITRSRGSLVKQFLRFHVEPRESNEFYGNMGVLEFTPGEREVVITLLTRLDGTPELDEHFWVILSSHGERESKLGRATLVNITILKNDYPHGIIEFVSDGLSASIKESKGEDIYHAVYGVIRTRGNFGAVNVSWMVSPDFTQDVFPVQGTVCFGDQEFFKNITVYSLVDEIPEEMEEFTIILLNATGGAQTGIRTTASLRILRNDDPVYFAEPCVLRVQEGETANFTVLRNGSVDGACTVQYATVDGKASGEEGDFAPVEKGETLVFEVGSREQSISVHVKDDGIPETDEPFYIVLFNSTGDTVVYEYGVATVIIEANDDPNGVFSLEPIDKAVEEGKTNAFWILRHRGHFGNVSVAWQLFQNASLQPGQEFYETSGTVNFTDGEETKPVILRAFPDRIPEFNEFYILRLVNISGPGGQLAETNFQVTVMIPFNDDPFGIFILDPECLEREVAEDVLSEDDMSYITSFTILRQQGVFGDVRVGWEVLSREFTAGLPPMIDFILLGSFPSTVPLQPHMRRHHSGTDVLYFSGLEGAFGTVDPKYQPFRNNTIANFTFSAWVMPNANTNGFLIAKDDSHGSIYYGVKIQTNETHVTLSLHYKTFGSNVTYIAKSTVMKYLEEGVWLHVLIILDDGIIEFYLDGKAMPRGIKSLKGEAITDGPGILRIGAGMDGGARFTGWMQDVRTYERKLTPEEIYELHAVPARTDLHPISGYLEFRQGESNKSFIVAARDDSEEEGEELFLLKLVSVDGGAQISKENTTARLRIQKSDNANGLFGFTGACIPEMTEEGSTVSCVVERTRGALGYVHVFYTISQIESEGINYLVDDFANASGTITFLPWQRSEVLNLYVLDEDMPELNEYFRVTLVSAVPGDGKLGSTPISGASIDPEKETTGITVKASDHPYGLMQFSTGLPPQPEDSMSLPASSVPHITVQEEDGEIRLLVIRAQGLLGRVTVGFRTVSLTAFSPEDYQSTAGTLEFQSGERYKYIFVNITDNSIPELEKSFKVELLNLDGGVSDLFRVDGSGSGEADTDFFLPPVLPHASLGVASQILVTIAASDHAHGVFEFSPESLFVSGTEPEDGYSTVVLNVTRTRGALSAVTLQWKVDSDLDGDLAITSGNITFETGQRIASITVEILSDEEPELDKALTVSILNVSSGSLGVLTNATLTILASDDPYGVFIFPNKTRPLSVEEATQNVALSIIRLKGLMGEVAVSYATIDDMEKPPYFPPNLARATQGGDYISASGLALFRVNQTEATITISILDDAEPERSESVFIELFNSSLVDKVQNRPIPHSPRLGPKVETVAHLVIVANDDAFGTVQLSATSVHVAENHVGPIINVTRTGGTFADVSVKFKAVPITAAAGEDYSIASSDVVLLEGETTKAVPIYIINDIYPELEETFLVQLLNETTGGATLGPLREAVITIEASDDPYGLFGFQNTKFIVEEPEFNSVRVNVPIIRNSGTLGNVTVQWVAIINGQFATGDLRVVSGNVTFAPGETIQTLLLEVLADDVPEIEEVVQVQLAAASGGGTIGLDRVANIVIPANDNPYGSVAFVQSVFRVQEPLERSSYANITVRRSGGHFGRLLLCYGTSDIDVVARAVEEGEDVLSYYESPTQGVPDPLWRTWVNVSAVEETQYTCATLCLKERACSAFSVVSGAEGPRCFWMTSWVSGTVNSSDFQTYKKNMTRVASLFSGQAVAGSDYEPVTRQWAVILEGDEFANLTVSVLPDDAPEMDESFLISLLEVHLMNISDSFKNQPTIGHPNTSAVVIGLNGDAFGVFIIYSVSPNTSEDGLCVEVQEQPQTSVELVIYRTGGSLGQVMVEWRVVGGTATEGLDFMGAGDILTFAEGETKKMAILTILDDSEPEDNESILVRLGATEGGSRILPSSDTVTVNILANDNVAGIVSFQTASRSVIGHEGEMLQFHVVRTPPGRGNVTVNWKVVGQNLEVNFANFTGQLFFSEGTLNKTIFVHLLDDNIPEEKEVYQVVLYDVKTQGVSPAGVALLDAQGYAAVLTVEASDEPHGVLNFALSSRFVVLQEANVTIQLFVNREFGSLGAINVTYATVPGIVSLKNNTEGNLAEPESDFIPVVGSLVLEEGETTAAISITVLEDDIPELKEYFLVNLTHVDLIMAPLTSSPPRLDSEGLTAQIVIDANDGAQGMIEWQRNRFEVNETDGVVTLVAQRSRAALGQVSLFMYAQNLEAQAGLDYMRTPQILHFTDGERFKHVDVMILDDDMPEGDERFQLLLTNPSPGLELGKNTIALITVLANDDGPGVLSFNNSGHIFLREPTSLYVQESVAVLVIVREPAQGLFGTVAVQFVVTEVNSSTESKDLSPSKGFIVLEEGVRSKTLRISAILDTEPEMDEHFVCTLFNPTGGARLGAHVQTLITIFQNQAPLGLFSISAVENSATSIDVEESNRSVYLNVSRTNGLDLTASVQWETVSETAFGMRGMDVVFSIFQSFFDKTALDWCFFTVEGSVYGVMLRKSSLVVYRWQGTFVPVEDLKVESPKTCEAFNIGVSPYLVITHGERSGEKPSINSVYMLTAGFRLVLIQTIIISGSCQVRHFTSDSQDYFIIASRRNDSELTQVFRWNGNNFAWHQTLPVRGVLGMALFSRGGSVFLAISQANIRQTSLLFTWSGTQFINFQELPISGITQVEALSSGDDVYLCFAKNTFLGNQNAIDIFVWEMGHSSLRYFQSLDFAAVKRIRSFTPASGIVHILLTAQDGSALYCWNSELNAFSFVLEAPAAHDAAFVTVKSLNSSKTLIALVGATDSHLYELTYVSSQSDFIPSLGELIFEPGDKEAIIAVNVLDDTVPEKEESFRVQLKSPRGGAEIGINSSVRVTVLANDGAYGVVAFAQNSLHKQLEELERDSLVTLNVERLRGTHGRITVAWEAAGSVSDVFPTSGVISFTEDQAMSMITLTVLADDLPELSEAVVVTLTQIVTEGVEDPLKGATIDQSRSRSVLTILPSDSPYGAVRWHTESLFNRVPEPTENITVVQLHIVRDKGLFGDISIHLIAKPNFLLHINNQATEDEDFVLQDSVIIMKENIKETHAEVAILPDEVPELDEGLIVTIAAVNLVNPNFPAEQPRVQRPRMESAEILIEENDDPRGIFNFHVVRDVGGVIIAHEGPPPLNVLQVPVVRMAGTFETVNVYWKATPDSAGLEDFQPSHGMLQFADGQVIAPILVTIIDDSEFELLETFTISLVSVTGGGRLGDDVSVNVVIAPNDSPFGIFGFEKKTVMVDGPLLSDDPDSYVTLTVVRSPGGKGAVRLHWAIEEKAKDDLSPLNGTLYFDETESQKSVILHTLKDGMVGEDRRFIIELTAADEVEISPVKGSASVIIRGDKSISEVGIASSSRHIIIGEPSATYNGTAIIDLVRGPGVSGEITVNWKILPPSRGEFVETSGQLTMLDGQTAATVVIQVLNDDIPEEKCHYEFQLTEISEGRMLHEASVSARITMVASDAPYGRFSFSHEQLHVSKAAQRVNVTVVRSGGSFGRARVLYETGSRTAEAGWDFVPASGELLFEAREKMKSLYIDILDDDLPEGPEEFVLAITRVDLQGRGYDFTIQENGLQIDQPPEIGNISIVRIIIMKNDNAEGIIEFDPKYTDISVEEDAGVITLPVLRLHGTYGHVSADFSSRGFSAVPGGYVLRGSSVTFQHGQNLSFINVSIIDDNGSEFEKQFEILLIGATGGAILGRHLVSKITIAKSDSPFGIIRFLNQSKISLPNPSSTMALHLVLERTGGLLGEIQVSWEVVGPDAEEPLPPHNGDFADPVSGTVSFGDGEGGVRSIILRVCPHEETEAEETFIVQLKPLREAKLDPRAKAVTLTIQKFGDPNGVIHFAPESLSKRRFSEPPPSDGPLLVSFLVTRSKGTSGDIKVHWELSSEFDITRDFLSTRGFFTIADGESDANFDVHLLPDDVPEIEEEYAVQLVSVEGGAELDLGKCTARFSVSANDDPHGVFALYSDRQSVLIGQNLDRSIQINITRLAGAFGAVAVRVQILSDNKEDPVATENEERQLVITDGARYKVGLVPLKNQVFLSLGSNFTLQLVSVRLLSGPFYGIPTILQEAKNAILSVPEEAANSQVGFESAAFQLMDIKAGTSQVMVSRKGTYGRLSVAWTTGYAPGSEIPEPIVIGNMTPTLGSLSFVHGEERKGVLLWTFPSPGRPEAFVLHLSGLRSSAAGGAQLRSGFTTAEIEPMGVFQFSPSSRNITVSEDAQTIRICVQRLFGFHGDLIKVSYETTAGSAKPPEDFEAVQKGEVFFQRFQPEIDFEITIINDQLPEIEETYYINLTSVETRGLGKGGVNWRPRLNPDLSVAVVTIVDNDDLTGAAVSVPVTAGTVAVDSTLLAMETGSTTHPNKSKITTIPYTTEVFAPVTETVTVSAIPEKLATAHSVISVKPDVVPGTVVASVYGTLSIGPPIVYVSEEMKNGTLSTADILIQRMGGFAGNVTITVKTFGGRCAQKEPSVWPFQDVYGVGNLTTWAVEEEDFEEQLLTLTFLYGERERKIAVQILDDDDAEGQEFFYVFLTDPQGGAEIVRGKDSTGFSAFAVIIISGSDLHNGIIGFSEESQRGLELREGADKNSQRLVVTRQPNRAFEEVQIFWRVTLNQTVTILQEKGANLTDELRFVAGVTTCTGGQTRCFIHLELNPKKVHQVEMPFFVELYDVTAGAAINNSARFAPIKLSKSGAPQSLVSFSVGSRLAVAHKKSTLISLQVARDSGTGIMMSVNFITQELRSAETVGRVLISPAVSGKDFVRTEGTLVFEPGQKSAVLDVVLTPEAGSLNKFPKRFQIVLFDPKGGARIDKVYGTANITLISDADSQAVWGLEDLLHRPLHEDILNRVLHNLNLRVATESTDEQLSAVMLIMEKITMEGRNQAFSIKSRTLLYELLCVLINPKRKDTRGFSHFVEVAEHFAFSLLTDVTCGSPGEKSKTILDSCPYLSILALHWNPQQINGHKFEGKEGDYIQIPERLLDVPEAEMLDGKNACTLVQFVEYSSQQWFIAGDNLPALKDKVLSLNVKGQSAQPLPNNNEVLYRIHAAEPRVVPHTSRCLLWNQAAASWLSDSQFCKVVEDASDYVECACSHMSVYAVYAQTDNSSSYNEAFFSAGLICISGLCLAVVSHMFCARHSMFAAKLLTHMMVASLGTQILFLASAYASPHLSEESCSAVAAVAHYLYLCQFSWMLIQSVNFWYVLVVSDEHTERRCLLFCLLSWGLPSFVVILLILILRGIYHRSMPQIYGLIHGDLCFIPNIYAALFTAALVPLMCLVVVFVVFIHAYQLKPQWKGYDDVFRGRTNAAEIPLILYLFALISMTWLWGGLHMAYGHFWMLVLFVIFNSLQGLYVFVVYFILHNQTCCPMKASYTVEMNGHPGPSTAFFTPGSGIPPAGEINKSTQNLINAMEEVPSDWERSSFQQTSQASPDLKTSPQNGASFPSSGGYGPGSLIADEESQEFDDLIFALKTGAGLSVSDNESGQGSQEGGTLTDSQIVELRRIPIADTHL.

A signal peptide spans 1–28 (MSVTSEPGMISSFLLVYLSTLFISFVFG). 22 Calx-beta domains span residues 29–116 (EAEI…FHLT), 132–236 (ASVT…IQLR), 251–362 (VEII…IMLL), 389–489 (YGVL…LTIL), 646–746 (PAIA…TLSL), 764–862 (DLII…VILS), 877–980 (VNIT…IILL), 994–1094 (ASLR…IVLF), 1108–1208 (ATVI…LRLV), 1440–1540 (AMPR…FLLK), 1562–1662 (QKSD…VTLV), 1706–1805 (TGLP…VELL), 1846–1948 (ILVT…VSIL), 1962–2075 (TLTI…IELF), 2103–2202 (HLVI…VQLL), 2218–2320 (VITI…VQLA), 2437–2537 (TLCL…FLIS), 2576–2672 (FIIY…VRLG), 2687–2786 (VTVN…VVLY), 2810–2921 (LTVE…VNLT), 2945–3044 (QIVI…LLLT), and 3067–3167 (DGPG…VCTL). Over 29–5901 (EAEIRFTGQT…TDNSSSYNEA (5873 aa)) the chain is Extracellular. EAR repeat units lie at residues 3251 to 3292 (VFSI…RWQG), 3293 to 3341 (TFVP…MLTA), 3344 to 3389 (RLVL…RWNG), 3391 to 3435 (NFAW…TWSG), 3437 to 3484 (QFIN…VWEM), and 3488 to 3530 (SLRY…CWNS). Calx-beta domains are found at residues 3581–3622 (QSDF…RVQL), 3636–3736 (SVRV…VVTL), 3772–3872 (GAVR…VTIA), 3919–4003 (GGVI…ISLV), 4017–4120 (VNVV…IELT), 4135–4235 (SVII…EFQL), 4251–4351 (ARIT…LAIT), 4384–4484 (RIII…ILLI), 4507–4607 (SPFG…IVQL), 4628–4728 (KFGD…AVQL), 4989–5089 (TTAE…INLT), 5281–5325 (AVEE…YVFL), and 5361–5461 (IGFS…FVEL). The region spanning 5740–5896 (SILALHWNPQ…AVYAQTDNSS (157 aa)) is the GAIN-B domain. 2 cysteine pairs are disulfide-bonded: cysteine 5849/cysteine 5878 and cysteine 5866/cysteine 5880. Positions 5849–5896 (CLLWNQAAASWLSDSQFCKVVEDASDYVECACSHMSVYAVYAQTDNSS) are GPS. Residues 5902–5922 (FFSAGLICISGLCLAVVSHMF) form a helical membrane-spanning segment. Over 5923–5932 (CARHSMFAAK) the chain is Cytoplasmic. Residues 5933-5953 (LLTHMMVASLGTQILFLASAY) form a helical membrane-spanning segment. Topologically, residues 5954-5973 (ASPHLSEESCSAVAAVAHYL) are extracellular. Residues 5974–5994 (YLCQFSWMLIQSVNFWYVLVV) form a helical membrane-spanning segment. The Cytoplasmic segment spans residues 5995–6003 (SDEHTERRC). A helical transmembrane segment spans residues 6004 to 6024 (LLFCLLSWGLPSFVVILLILI). Residues 6025–6052 (LRGIYHRSMPQIYGLIHGDLCFIPNIYA) lie on the Extracellular side of the membrane. The chain crosses the membrane as a helical span at residues 6053–6073 (ALFTAALVPLMCLVVVFVVFI). Residues 6074–6097 (HAYQLKPQWKGYDDVFRGRTNAAE) are Cytoplasmic-facing. A helical transmembrane segment spans residues 6098 to 6118 (IPLILYLFALISMTWLWGGLH). At 6119–6126 (MAYGHFWM) the chain is on the extracellular side. A helical membrane pass occupies residues 6127–6147 (LVLFVIFNSLQGLYVFVVYFI). Topologically, residues 6148-6298 (LHNQTCCPMK…RRIPIADTHL (151 aa)) are cytoplasmic. Disordered stretches follow at residues 6206–6242 (ERSS…GSLI) and 6264–6283 (SVSD…LTDS). Composition is skewed to polar residues over residues 6208-6226 (SSFQ…SPQN) and 6265-6283 (VSDN…LTDS).

This sequence belongs to the G-protein coupled receptor 2 family. Adhesion G-protein coupled receptor (ADGR) subfamily. Forms a heterodimer, consisting of a large extracellular region (alpha subunit) non-covalently linked to a seven-transmembrane moiety (beta subunit). Interacts (via the cytoplasmic region) with PDZD7. Component of USH2 complex, composed of ADGRV1, PDZD7, USH2A and WHRN. Interacts with USH2A and WHRN. Interacts (via the cytoplasmic region) with MYO7A (via MyTH4-FERM domains). Autoproteolytically cleaved into 2 subunits, an extracellular alpha subunit and a seven-transmembrane subunit. Expressed by oligodendrocytes. In midbrain, enriched in the myelinated regions of the superior and inferior colliculi. In the cochlea, expressed in developing hair cells. Expressed by photoreceptors in the retina.

It is found in the cell membrane. It localises to the cell projection. The protein resides in the stereocilium membrane. The protein localises to the photoreceptor inner segment. Its subcellular location is the secreted. G-protein coupled receptor which has an essential role in the development of hearing and vision. Couples to G-alpha(i)-proteins, GNAI1/2/3, G-alpha(q)-proteins, GNAQ, as well as G-alpha(s)-proteins, GNAS, inhibiting adenylate cyclase (AC) activity and cAMP production. Required for the hair bundle ankle formation, which connects growing stereocilia in developing cochlear hair cells of the inner ear. In response to extracellular calcium, activates kinases PKA and PKC to regulate myelination by inhibiting the ubiquitination of MAG, thus enhancing the stability of this protein in myelin-forming cells of the auditory pathway. In retina photoreceptors, the USH2 complex is required for the maintenance of periciliary membrane complex that seems to play a role in regulating intracellular protein transport. Involved in the regulation of bone metabolism. In terms of biological role, cleaved ADGRV1 beta-subunit couples with G-alpha(i)-proteins, GNAI1/2/3, and constitutively inhibits adenylate cyclase (AC) activity with a stronger effect than full ADGRV1. The sequence is that of Adhesion G-protein coupled receptor V1 from Mus musculus (Mouse).